A 181-amino-acid polypeptide reads, in one-letter code: Resolvase/recombinase (181 aa).

The Resolvase/invertase-type recombinase catalytic domain occupies 2–137; that stretch reads RLFGYARVST…EGRLEAKAKG (136 aa). S10 serves as the catalytic O-(5'-phospho-DNA)-serine intermediate. A DNA-binding region (H-T-H motif) is located at residues 161 to 180; that stretch reads AMEIAKRLKIGRSTVYKVLA.

Belongs to the site-specific recombinase resolvase family.

Functionally, site-specific recombination protein. In Pseudomonas putida (Arthrobacter siderocapsulatus), this protein is Resolvase/recombinase.